A 243-amino-acid polypeptide reads, in one-letter code: Aldehyde decarbonylase (243 aa).

Glu45, Glu73, His76, Glu128, and His160 together coordinate Fe cation.

This sequence belongs to the aldehyde decarbonylase family. The cofactor is Binds 2 metal cations per subunit. The catalytic dinuclear metal-binding site could be either a di-iron or a manganese-iron cofactor..

The catalysed reaction is a long-chain fatty aldehyde + 2 NADPH + O2 + H(+) = a long-chain alkane + formate + 2 NADP(+) + H2O. Catalyzes the decarbonylation of fatty aldehydes to alkanes. Requires the presence of ferredoxin, ferredoxin reductase and NADPH for in vitro decarbonylase activity. Involved in the biosynthesis of alkanes, mainly heptadecane and pentadecane. In Prochlorococcus marinus (strain MIT 9313), this protein is Aldehyde decarbonylase.